The chain runs to 566 residues: Protein RocB (566 aa).

Functionally, involved in arginine degradative pathway. This is Protein RocB (rocB) from Bacillus subtilis (strain 168).